Reading from the N-terminus, the 398-residue chain is Stearoyl-[acyl-carrier-protein] 9-desaturase, chloroplastic (398 aa).

A chloroplast-targeting transit peptide spans 1–34 (MALKLHHTAFNPSMAVTSSGLPRSYHLRSHRVFM). The tract at residues 46 to 66 (IPNAKKPHMPPREAHVQKTHS) is disordered. Fe cation is bound by residues glutamate 140, glutamate 178, histidine 181, glutamate 231, glutamate 264, and histidine 267.

This sequence belongs to the fatty acid desaturase type 2 family. As to quaternary structure, homodimer. It depends on Fe(2+) as a cofactor.

The protein resides in the plastid. The protein localises to the chloroplast. It carries out the reaction octadecanoyl-[ACP] + 2 reduced [2Fe-2S]-[ferredoxin] + O2 + 2 H(+) = (9Z)-octadecenoyl-[ACP] + 2 oxidized [2Fe-2S]-[ferredoxin] + 2 H2O. It participates in lipid metabolism; fatty acid metabolism. Its function is as follows. Converts stearoyl-ACP to oleoyl-ACP by introduction of a cis double bond between carbons 9 and 10 of the acyl chain. The protein is Stearoyl-[acyl-carrier-protein] 9-desaturase, chloroplastic of Simmondsia chinensis (Jojoba).